Consider the following 204-residue polypeptide: Probable UbiX-like flavin prenyltransferase (204 aa).

Residues 21–23 (GAT), S47, 98–101 (SMKS), and R133 contribute to the FMN site.

Belongs to the UbiX/PAD1 family. YclB subfamily. Homododecamer.

It catalyses the reaction dimethylallyl phosphate + FMNH2 = prenylated FMNH2 + phosphate. Its function is as follows. Involved in the non-oxidative decarboxylation and detoxification of phenolic derivatives under both aerobic and anaerobic conditions. Flavin prenyltransferase that catalyzes the synthesis of the prenylated FMN cofactor (prenyl-FMN) for phenolic acid decarboxylase. The polypeptide is Probable UbiX-like flavin prenyltransferase (Bacillus subtilis (strain 168)).